Reading from the N-terminus, the 75-residue chain is ATP synthase subunit 9, mitochondrial (75 aa).

The next 2 membrane-spanning stretches (helical) occupy residues 10–30 (LVLG…GILF) and 55–75 (FALV…VYFI).

The protein belongs to the ATPase C chain family. In terms of assembly, F-type ATPases have 2 components, CF(1) - the catalytic core - and CF(0) - the membrane proton channel. CF(1) has five subunits: alpha(3), beta(3), gamma(1), delta(1), epsilon(1). CF(0) has three main subunits: a, b and c.

It localises to the mitochondrion membrane. Its function is as follows. Mitochondrial membrane ATP synthase (F(1)F(0) ATP synthase or Complex V) produces ATP from ADP in the presence of a proton gradient across the membrane which is generated by electron transport complexes of the respiratory chain. F-type ATPases consist of two structural domains, F(1) - containing the extramembraneous catalytic core and F(0) - containing the membrane proton channel, linked together by a central stalk and a peripheral stalk. During catalysis, ATP synthesis in the catalytic domain of F(1) is coupled via a rotary mechanism of the central stalk subunits to proton translocation. Part of the complex F(0) domain. A homomeric c-ring of probably 10 subunits is part of the complex rotary element. The polypeptide is ATP synthase subunit 9, mitochondrial (ATP9) (Paramecium tetraurelia).